Reading from the N-terminus, the 288-residue chain is Ribosomal RNA small subunit methyltransferase A (288 aa).

Positions 28, 30, 55, 77, 103, and 123 each coordinate S-adenosyl-L-methionine.

The protein belongs to the class I-like SAM-binding methyltransferase superfamily. rRNA adenine N(6)-methyltransferase family. RsmA subfamily.

It localises to the cytoplasm. It catalyses the reaction adenosine(1518)/adenosine(1519) in 16S rRNA + 4 S-adenosyl-L-methionine = N(6)-dimethyladenosine(1518)/N(6)-dimethyladenosine(1519) in 16S rRNA + 4 S-adenosyl-L-homocysteine + 4 H(+). Its function is as follows. Specifically dimethylates two adjacent adenosines (A1518 and A1519) in the loop of a conserved hairpin near the 3'-end of 16S rRNA in the 30S particle. May play a critical role in biogenesis of 30S subunits. The sequence is that of Ribosomal RNA small subunit methyltransferase A from Xanthobacter autotrophicus (strain ATCC BAA-1158 / Py2).